The sequence spans 88 residues: UPF0250 protein SO_1163 (88 aa).

This sequence belongs to the UPF0250 family.

The protein is UPF0250 protein SO_1163 of Shewanella oneidensis (strain ATCC 700550 / JCM 31522 / CIP 106686 / LMG 19005 / NCIMB 14063 / MR-1).